The chain runs to 580 residues: Isocitrate lyase (580 aa).

106-108 (SGW) contacts substrate. A Mg(2+)-binding site is contributed by aspartate 177. The active-site Proton acceptor is the cysteine 215. Substrate is bound by residues 216–217 (GH), arginine 252, 441–445 (NLSPS), and threonine 476. Positions 578-580 (SRM) match the Microbody targeting signal motif.

This sequence belongs to the isocitrate lyase/PEP mutase superfamily. Isocitrate lyase family. As to quaternary structure, homotetramer. Mg(2+) serves as cofactor.

Its subcellular location is the glyoxysome. The catalysed reaction is D-threo-isocitrate = glyoxylate + succinate. It participates in carbohydrate metabolism; glyoxylate cycle; (S)-malate from isocitrate: step 1/2. Functionally, involved in storage lipid mobilization during the growth of higher plant seedling. The protein is Isocitrate lyase (ICL 8) of Pinus taeda (Loblolly pine).